The primary structure comprises 576 residues: Calcium-dependent protein kinase 11 (576 aa).

Gly2 is lipidated: N-myristoyl glycine. Positions 27–88 are disordered; the sequence is PADAAPPALP…ANKAAPKVKR (62 aa). The span at 41–56 shows a compositional bias: low complexity; sequence APSDQAPEPVTIPPSE. Residues 113-371 enclose the Protein kinase domain; sequence YTIGKKLGQG…AHEALCHPWV (259 aa). ATP contacts are provided by residues 119–127 and Lys142; that span reads LGQGQFGTT. The Proton acceptor role is filled by Asp237. The tract at residues 377-407 is autoinhibitory domain; sequence APDKPLDSAVLSRLKQFSAMNKLKKMALRVI. EF-hand domains follow at residues 414 to 449, 450 to 485, 486 to 521, and 522 to 555; these read EEIAGLKEMFKMLDTDNSGHITLEELKTGLQRVGAN, LMDSEIDALMEAADIDNSGTIDYGEFIAATLHINKV, EKEDKLFAAFSYFDKDGSGYITQDELQKACEEFGIG, and DTRIEDIIGDIDQDNDGRIDYNEFVEMMQKGNNA. 20 residues coordinate Ca(2+): Asp427, Asp429, Ser431, His433, Glu438, Asp463, Asp465, Ser467, Thr469, Glu474, Asp499, Asp501, Ser503, Tyr505, Glu510, Asp533, Asp535, Asp537, Arg539, and Glu544.

It belongs to the protein kinase superfamily. Ser/Thr protein kinase family. CDPK subfamily.

Its subcellular location is the membrane. The enzyme catalyses L-seryl-[protein] + ATP = O-phospho-L-seryl-[protein] + ADP + H(+). It carries out the reaction L-threonyl-[protein] + ATP = O-phospho-L-threonyl-[protein] + ADP + H(+). Its activity is regulated as follows. Activated by calcium. Autophosphorylation may play an important role in the regulation of the kinase activity. Functionally, may play a role in signal transduction pathways that involve calcium as a second messenger. In Oryza sativa subsp. japonica (Rice), this protein is Calcium-dependent protein kinase 11.